A 321-amino-acid polypeptide reads, in one-letter code: Annexin A5 (321 aa).

Annexin repeat units lie at residues 15-86 (FDAR…SLMR), 87-158 (PARI…VLLQ), 170-242 (ALVE…AVVK), and 246-317 (SVPA…LLCG).

The protein belongs to the annexin family.

Functionally, collagen-binding protein. The chain is Annexin A5 (ANXA5) from Gallus gallus (Chicken).